The primary structure comprises 512 residues: NAD(P)H-quinone oxidoreductase subunit 2 B, chloroplastic (512 aa).

The next 14 helical transmembrane spans lie at 31–51 (FIFPECILIFGLILLLMIDLT), 57–77 (IPWLYFISSTSFVMSITALLF), 99–119 (IFQFLILLCSTLCIPLSVEYI), 124–144 (MAITEFLLFILTATLGGMFLC), 149–169 (LITIFVALECFSLCSYLLSGY), 183–203 (YLLMGGASSSILVYGFSWLYG), 229–249 (ISIALIFITVGIGFKLSLAPF), 261–281 (PTPVVAFLSVTSKVAALALAT), 295–315 (WHLLLEILAILSMIFGNLIAI), 323–343 (MLAYSSIGQIGYVIIGIIVGD), 354–374 (YMLFYIAMNLGTFACIILFGL), 395–415 (ALSLALCLLSLGGLPPLAGFF), 418–438 (LYLFWCGWQAGLYFLVSIGLL), and 484–504 (MIVCVIASTILGISMNPIIAI).

It belongs to the complex I subunit 2 family. In terms of assembly, NDH is composed of at least 16 different subunits, 5 of which are encoded in the nucleus.

Its subcellular location is the plastid. It is found in the chloroplast thylakoid membrane. The catalysed reaction is a plastoquinone + NADH + (n+1) H(+)(in) = a plastoquinol + NAD(+) + n H(+)(out). It catalyses the reaction a plastoquinone + NADPH + (n+1) H(+)(in) = a plastoquinol + NADP(+) + n H(+)(out). NDH shuttles electrons from NAD(P)H:plastoquinone, via FMN and iron-sulfur (Fe-S) centers, to quinones in the photosynthetic chain and possibly in a chloroplast respiratory chain. The immediate electron acceptor for the enzyme in this species is believed to be plastoquinone. Couples the redox reaction to proton translocation, and thus conserves the redox energy in a proton gradient. The sequence is that of NAD(P)H-quinone oxidoreductase subunit 2 B, chloroplastic from Arabidopsis thaliana (Mouse-ear cress).